A 431-amino-acid polypeptide reads, in one-letter code: 3-deoxy-D-manno-octulosonic acid transferase (431 aa).

The helical; Signal-anchor transmembrane segment at 5-27 threads the bilayer; sequence WLTSRLYDAFLVCAFFVSAPRIF. The Proton acceptor role is filled by Glu-67. CMP is bound by residues 275–276, 315–317, and 342–345; these read PR, MGV, and NLLE.

The protein belongs to the glycosyltransferase group 1 family. Glycosyltransferase 30 subfamily.

The protein resides in the cell inner membrane. It catalyses the reaction lipid IVA (E. coli) + CMP-3-deoxy-beta-D-manno-octulosonate = alpha-Kdo-(2-&gt;6)-lipid IVA (E. coli) + CMP + H(+). The enzyme catalyses alpha-Kdo-(2-&gt;6)-lipid IVA (E. coli) + CMP-3-deoxy-beta-D-manno-octulosonate = alpha-Kdo-(2-&gt;4)-alpha-Kdo-(2-&gt;6)-lipid IVA (E. coli) + CMP + H(+). The catalysed reaction is alpha-Kdo-(2-&gt;4)-alpha-Kdo-(2-&gt;6)-lipid IVA (E. coli) + CMP-3-deoxy-beta-D-manno-octulosonate = alpha-Kdo-(2-&gt;8)-alpha-Kdo-(2-&gt;4)-alpha-Kdo-(2-&gt;6)-lipid IVA (E. coli) + CMP + H(+). It participates in bacterial outer membrane biogenesis; LPS core biosynthesis. In terms of biological role, involved in lipopolysaccharide (LPS) biosynthesis. Catalyzes the transfer of three 3-deoxy-D-manno-octulosonate (Kdo) residues from CMP-Kdo to lipid IV(A), the tetraacyldisaccharide-1,4'-bisphosphate precursor of lipid A. Thus generates the genus-specific LPS epitope of Chlamydia, composed of the trisaccharide alpha-Kdo-(2-&gt;8)-alpha-Kdo-(2-&gt;4)-alpha-Kdo. This is 3-deoxy-D-manno-octulosonic acid transferase (waaA) from Chlamydia trachomatis serovar A (strain ATCC VR-571B / DSM 19440 / HAR-13).